The primary structure comprises 676 residues: RNA helicase NPH-II (676 aa).

Residues 172 to 347 form the Helicase ATP-binding domain; that stretch reads FLAWISHRPV…IFLPNPAFIH (176 aa). 185 to 192 is an ATP binding site; sequence GGTGVGKT. A DEXH box motif is present at residues 296-299; that stretch reads DEVH. The 170-residue stretch at 366–535 folds into the Helicase C-terminal domain; it reads NPSSRMAYIE…NYILYANKFN (170 aa).

It belongs to the DEAD box helicase family. DEAH subfamily. In terms of assembly, monomer.

The protein resides in the virion. The enzyme catalyses ATP + H2O = ADP + phosphate + H(+). Functionally, NTP-dependent helicase that catalyzes unidirectional unwinding of 3'tailed duplex RNAs and plays an important role during transcription of early mRNAs, presumably by preventing R-loop formation behind the elongating RNA polymerase. Might also play a role in the export of newly synthesized mRNA chains out of the core into the cytoplasm. Required for replication and propagation of viral particles. The protein is RNA helicase NPH-II (OPG084) of Monkeypox virus.